Reading from the N-terminus, the 413-residue chain is MSSYALPSMQPTPTSSIPLRQMSQPTTSAPSNSASSTPYSPQQVPLTHNSYPLSTPSSFQHGQTRLPPINCLAEPFNRPQPWHSNSAAPASSSPTSATLSTAAHPVHTNAAQVAGSSSSYVYSVPPTNSTTSQASAKHSAVPHRSSQFQSTTLTPSTTDSSSTDVSSSDSVSTSASSSNASNTVSVTSPASSSATPLPNQPSQQQFLVSKNDAFTTFVHSVHNTPMQQSMYVPQQQTSHSSGASYQNESANPPVQSPMQYSYSQGQPFSYPQHKNQSFSASPIDPSMSYVYRAPESFSSINANVPYGRNEYLRRVTSLVPNQPEYTGPYTRNPELRTSHKLAERKRRKEIKELFDDLKDALPLDKSTKSSKWGLLTRAIQYIEQLKSEQVALEAYVKSLEENMQSNKEVTKGT.

Polar residues predominate over residues 1–22 (MSSYALPSMQPTPTSSIPLRQM). 2 disordered regions span residues 1–202 (MSSY…NQPS) and 230–265 (MYVPQQQTSHSSGASYQNESANPPVQSPMQYSYSQG). Residues 23–42 (SQPTTSAPSNSASSTPYSPQ) show a composition bias toward low complexity. Positions 43–63 (QVPLTHNSYPLSTPSSFQHGQ) are enriched in polar residues. Composition is skewed to low complexity over residues 86–103 (SAAPASSSPTSATLSTAA) and 116–126 (SSSSYVYSVPP). A compositionally biased stretch (polar residues) spans 127–136 (TNSTTSQASA). Low complexity predominate over residues 150–197 (STTLTPSTTDSSSTDVSSSDSVSTSASSSNASNTVSVTSPASSSATPL). The bHLH domain occupies 334–385 (ELRTSHKLAERKRRKEIKELFDDLKDALPLDKSTKSSKWGLLTRAIQYIEQL).

Efficient DNA binding requires dimerization with another bHLH protein.

The protein resides in the nucleus. Its function is as follows. Involved in the sexual differentiation process. Modulate the ability of the cell to differentiate in response to the nitrogen starvation signal; in particular in response to decreases in the level of cellular cAMP. This Schizosaccharomyces pombe (strain 972 / ATCC 24843) (Fission yeast) protein is Protein esc1 (esc1).